The primary structure comprises 183 residues: Ribosome rescue factor SmrB (183 aa).

Residues 98–173 (LDLHGLTQLQ…GDAALLVLIE (76 aa)) enclose the Smr domain.

The protein belongs to the SmrB family. In terms of assembly, associates with collided ribosomes, but not with correctly translating polysomes.

Acts as a ribosome collision sensor. Detects stalled/collided disomes (pairs of ribosomes where the leading ribosome is stalled and a second ribosome has collided with it) and endonucleolytically cleaves mRNA at the 5' boundary of the stalled ribosome. Stalled/collided disomes form a new interface (primarily via the 30S subunits) that binds SmrB. Cleaved mRNA becomes available for tmRNA ligation, leading to ribosomal subunit dissociation and rescue of stalled ribosomes. The chain is Ribosome rescue factor SmrB from Escherichia fergusonii (strain ATCC 35469 / DSM 13698 / CCUG 18766 / IAM 14443 / JCM 21226 / LMG 7866 / NBRC 102419 / NCTC 12128 / CDC 0568-73).